A 179-amino-acid chain; its full sequence is uncharacterized protein (179 aa).

4 helical membrane passes run 9 to 31 (WILV…VSTL), 41 to 63 (AFLL…YGSF), 114 to 136 (AYYG…LLGA), and 146 to 168 (AFWG…NYLM).

It localises to the cell membrane. This is an uncharacterized protein from Aquifex aeolicus (strain VF5).